A 363-amino-acid chain; its full sequence is Probable dual-specificity RNA methyltransferase RlmN (363 aa).

Residue glutamate 99 is the Proton acceptor of the active site. The 237-residue stretch at 105–341 (SENRMTACVS…VTVRKSHGAS (237 aa)) folds into the Radical SAM core domain. Cysteines 112 and 346 form a disulfide. Residues cysteine 119, cysteine 123, and cysteine 126 each contribute to the [4Fe-4S] cluster site. S-adenosyl-L-methionine-binding positions include 171-172 (GE), serine 204, 227-229 (SLH), and asparagine 303. The active-site S-methylcysteine intermediate is cysteine 346.

It belongs to the radical SAM superfamily. RlmN family. Requires [4Fe-4S] cluster as cofactor.

The protein resides in the cytoplasm. It carries out the reaction adenosine(2503) in 23S rRNA + 2 reduced [2Fe-2S]-[ferredoxin] + 2 S-adenosyl-L-methionine = 2-methyladenosine(2503) in 23S rRNA + 5'-deoxyadenosine + L-methionine + 2 oxidized [2Fe-2S]-[ferredoxin] + S-adenosyl-L-homocysteine. The enzyme catalyses adenosine(37) in tRNA + 2 reduced [2Fe-2S]-[ferredoxin] + 2 S-adenosyl-L-methionine = 2-methyladenosine(37) in tRNA + 5'-deoxyadenosine + L-methionine + 2 oxidized [2Fe-2S]-[ferredoxin] + S-adenosyl-L-homocysteine. Functionally, specifically methylates position 2 of adenine 2503 in 23S rRNA and position 2 of adenine 37 in tRNAs. The protein is Probable dual-specificity RNA methyltransferase RlmN of Chlorobium phaeobacteroides (strain DSM 266 / SMG 266 / 2430).